The chain runs to 106 residues: Small cardioactive peptide-related peptide (106 aa).

The N-terminal stretch at 1–20 is a signal peptide; that stretch reads MFCKHLSFVAITICFLLVLA. Positions 21-41 are cleaved as a propeptide — amino-terminal spacer peptide; sequence KTENEIQQKNIKFDQRTWRNM. Position 52 is a glutamine amide (Gln52). Positions 55-106 are cleaved as a propeptide — carboxy-terminal spacer peptide; it reads SDNQPDYTCCGMPLTKYVGICPIGMECCPGLKKVLQKSGQRTIYSVCVADAY.

Expression is seen in the peripheral and central nervous systems in tissues such as the brain, the inferior buccal ganglion, the gastric ganglion, the olfactory lobe, the peduncle lobe and the optic lobe. Expression in the brain is distributed in the median inferior frontal lobe, the superior buccal lobe, the prebranchial lobe and the pedal lobe. Not expressed in the vasomotor lobe or the palliovisceral lobe that controls the cardiac system.

Its subcellular location is the secreted. Functionally, evokes contractions in the radula protractor muscle, and may regulate feeding behavior and gut motility by controlling muscle contraction of the buccal mass. This is Small cardioactive peptide-related peptide from Octopus vulgaris (Common octopus).